The following is a 270-amino-acid chain: Imidazoleglycerol-phosphate dehydratase 1, chloroplastic (270 aa).

The N-terminal 62 residues, Met-1–Cys-62, are a transit peptide targeting the chloroplast. Position 63 is an N-acetylserine (Ser-63). Residues Glu-84, His-110–His-118, His-136–Glu-140, Arg-162, and Arg-184 contribute to the substrate site. Positions 110, 136, 137, and 140 each coordinate Mn(2+). Residues His-208, His-232, His-233, and Glu-236 each coordinate Mn(2+). Substrate-binding positions include His-232–Lys-240 and Ser-262–Lys-264. Positions Thr-250–Ser-270 are disordered.

This sequence belongs to the imidazoleglycerol-phosphate dehydratase family. Requires Mn(2+) as cofactor.

It localises to the plastid. The protein resides in the chloroplast. The enzyme catalyses D-erythro-1-(imidazol-4-yl)glycerol 3-phosphate = 3-(imidazol-4-yl)-2-oxopropyl phosphate + H2O. It participates in amino-acid biosynthesis; L-histidine biosynthesis; L-histidine from 5-phospho-alpha-D-ribose 1-diphosphate: step 6/9. The polypeptide is Imidazoleglycerol-phosphate dehydratase 1, chloroplastic (Arabidopsis thaliana (Mouse-ear cress)).